Reading from the N-terminus, the 530-residue chain is Bifunctional purine biosynthesis protein PurH (530 aa).

The 148-residue stretch at 1–148 (MNNARPIHRA…KNHKDVAIVV (148 aa)) folds into the MGS-like domain.

The protein belongs to the PurH family.

It carries out the reaction (6R)-10-formyltetrahydrofolate + 5-amino-1-(5-phospho-beta-D-ribosyl)imidazole-4-carboxamide = 5-formamido-1-(5-phospho-D-ribosyl)imidazole-4-carboxamide + (6S)-5,6,7,8-tetrahydrofolate. The catalysed reaction is IMP + H2O = 5-formamido-1-(5-phospho-D-ribosyl)imidazole-4-carboxamide. The protein operates within purine metabolism; IMP biosynthesis via de novo pathway; 5-formamido-1-(5-phospho-D-ribosyl)imidazole-4-carboxamide from 5-amino-1-(5-phospho-D-ribosyl)imidazole-4-carboxamide (10-formyl THF route): step 1/1. Its pathway is purine metabolism; IMP biosynthesis via de novo pathway; IMP from 5-formamido-1-(5-phospho-D-ribosyl)imidazole-4-carboxamide: step 1/1. The polypeptide is Bifunctional purine biosynthesis protein PurH (Vibrio cholerae serotype O1 (strain M66-2)).